Consider the following 194-residue polypeptide: Lectin-C (194 aa).

Residues 1–26 (MKRSNSIAVMLVLVLSSLMLLLPVEG) form the signal peptide. Residues 27 to 44 (QGHEGHGVGEILLMGKLG) constitute a propeptide, removed in mature form. 3 consecutive Chitin-binding type-1 domains span residues 45 to 86 (APVC…QCDY), 87 to 127 (NRCG…QCSY), and 128 to 168 (WRCG…QCDL). Cystine bridges form between Cys-48–Cys-63, Cys-57–Cys-69, Cys-62–Cys-76, Cys-80–Cys-84, Cys-89–Cys-104, Cys-98–Cys-110, Cys-103–Cys-117, Cys-121–Cys-125, Cys-130–Cys-145, Cys-139–Cys-151, Cys-144–Cys-158, and Cys-162–Cys-166. The propeptide at 171–194 (LLPSPLRRIIAIRKLKANLANMLS) is removed in mature form.

As to quaternary structure, homodimer. The homodimers are asymmetric; formed in a 'head-to-tail' fashion via hydrophobic interactions between aromatic residues of the carbohydrate-binding sites of each subunit.

Functionally, N-acetyl-D-glucosamine binding lectin. Almost no hemagglutinating activity towards human erythrocytes. Low mitogenic activity towards human peripheral blood lymphocytes. In Phytolacca americana (American pokeweed), this protein is Lectin-C.